A 341-amino-acid polypeptide reads, in one-letter code: Cyanuric acid amidohydrolase (341 aa).

The segment at 1 to 90 (MAPIEILKFP…HVTFFLRSPG (90 aa)) is RU A. Substrate contacts are provided by residues arginine 51 and 71-72 (SG). The interval 95-229 (GLSAAVGHTR…CHILVLASTS (135 aa)) is RU B. The active site involves lysine 144. Substrate is bound by residues arginine 176 and 212–213 (SS). Serine 212 functions as the Nucleophile in the catalytic mechanism. An RU C region spans residues 235 to 341 (LHAVSRPMAD…SLCLVYETSI (107 aa)). Glutamate 273 lines the Mg(2+) pocket. Residues arginine 300 and 319-320 (SG) each bind substrate. Mg(2+) contacts are provided by alanine 322, glutamine 325, glycine 326, proline 327, and glycine 330.

Belongs to the cyclic amide hydrolase (CyAH) family. In terms of assembly, homotetramer.

It carries out the reaction cyanurate + H2O = 1-carboxybiuret + H(+). It participates in xenobiotic degradation; atrazine degradation; biuret from cyanurate: step 1/1. Its activity is regulated as follows. Inhibited by barbituric acid. Its function is as follows. Responsible for the hydrolysis of cyanuric acid, an intermediate formed during catabolism of s-triazine based compounds in herbicides such as atrazine and polymers such as melamine. Catalyzes the hydrolytic opening of the s-triazine ring of cyanuric acid (2,4,6-trihydroxy-s-triazine) to yield carbon dioxide and carboxybiuret, which spontaneously decarboxylates to biuret. Only active on cyanuric acid and N-methylisocyanuric acid. This Sarocladium sp protein is Cyanuric acid amidohydrolase.